The primary structure comprises 419 residues: uncharacterized protein (419 aa).

The next 13 helical transmembrane spans lie at 5–25 (MIIV…ALII), 26–46 (AAGV…AQQI), 53–73 (FPML…GGEL), 102–122 (VFGG…SVLI), 144–164 (VIDV…VSGV), 170–190 (FVAG…VCWF), 210–230 (ATLA…ILFL), 234–254 (LATP…LSLL), 274–294 (ATGV…VLTF), 309–329 (ISSP…VGMP), 332–352 (MPPA…TIGL), 360–380 (MMVI…TLFI), and 396–416 (LWPF…IPAL).

This sequence belongs to the YiaN/YgiK family.

The protein resides in the cell inner membrane. This is an uncharacterized protein from Sinorhizobium fredii (strain NBRC 101917 / NGR234).